The sequence spans 993 residues: DNA double-strand break repair Rad50 ATPase (993 aa).

ATP-binding positions include R12, 32-38 (NGSGKSS), and Q133. Coiled-coil stretches lie at residues 192-222 (LENL…LEKL) and 402-493 (EELK…LEKT). One can recognise a Zinc-hook domain in the interval 452 to 556 (ENELKEKYED…KLNEIDSFKL (105 aa)). 2 residues coordinate Zn(2+): C497 and C500. Coiled coils occupy residues 570–612 (KVEE…LEND), 646–677 (DSSK…EINL), and 702–731 (ETEK…VLKN).

It belongs to the SMC family. RAD50 subfamily. As to quaternary structure, homodimer. Forms a heterotetramer composed of two Mre11 subunits and two Rad50 subunits. The cofactor is Zn(2+).

In terms of biological role, part of the Rad50/Mre11 complex, which is involved in the early steps of DNA double-strand break (DSB) repair. The complex may facilitate opening of the processed DNA ends to aid in the recruitment of HerA and NurA. Rad50 controls the balance between DNA end bridging and DNA resection via ATP-dependent structural rearrangements of the Rad50/Mre11 complex. This is DNA double-strand break repair Rad50 ATPase from Methanococcus maripaludis (strain DSM 14266 / JCM 13030 / NBRC 101832 / S2 / LL).